Here is a 281-residue protein sequence, read N- to C-terminus: Large ribosomal subunit protein uL2 (281 aa).

The disordered stretch occupies residues 223–281 (VRGSVMNPVDHPHGGGEGKQPVGRKSPLTPWGKIALGVKTRKTKKSSNKLILRRRKDAK). Basic residues predominate over residues 261–281 (KTRKTKKSSNKLILRRRKDAK).

Belongs to the universal ribosomal protein uL2 family. Part of the 50S ribosomal subunit. Forms a bridge to the 30S subunit in the 70S ribosome.

Functionally, one of the primary rRNA binding proteins. Required for association of the 30S and 50S subunits to form the 70S ribosome, for tRNA binding and peptide bond formation. It has been suggested to have peptidyltransferase activity; this is somewhat controversial. Makes several contacts with the 16S rRNA in the 70S ribosome. The sequence is that of Large ribosomal subunit protein uL2 from Mycoplasmopsis synoviae (strain 53) (Mycoplasma synoviae).